The primary structure comprises 468 residues: Uronate isomerase (468 aa).

This sequence belongs to the metallo-dependent hydrolases superfamily. Uronate isomerase family.

The catalysed reaction is D-glucuronate = D-fructuronate. It catalyses the reaction aldehydo-D-galacturonate = keto-D-tagaturonate. Its pathway is carbohydrate metabolism; pentose and glucuronate interconversion. In Lachnospira eligens (strain ATCC 27750 / DSM 3376 / VPI C15-48 / C15-B4) (Eubacterium eligens), this protein is Uronate isomerase.